A 141-amino-acid polypeptide reads, in one-letter code: Large ribosomal subunit protein uL11 (141 aa).

This sequence belongs to the universal ribosomal protein uL11 family. In terms of assembly, part of the ribosomal stalk of the 50S ribosomal subunit. Interacts with L10 and the large rRNA to form the base of the stalk. L10 forms an elongated spine to which L12 dimers bind in a sequential fashion forming a multimeric L10(L12)X complex. One or more lysine residues are methylated.

In terms of biological role, forms part of the ribosomal stalk which helps the ribosome interact with GTP-bound translation factors. This is Large ribosomal subunit protein uL11 from Chlamydia abortus (strain DSM 27085 / S26/3) (Chlamydophila abortus).